Here is a 388-residue protein sequence, read N- to C-terminus: Putative membrane protein MJ1562 (388 aa).

6 consecutive transmembrane segments (helical) span residues 22–42 (FLML…ATNV), 219–239 (SQSF…IIYF), 246–266 (IMPL…MGLL), 273–293 (ATAG…IHLM), 320–340 (AVMA…LAPL), and 351–371 (ALGI…LIVI).

It belongs to the resistance-nodulation-cell division (RND) (TC 2.A.6) family. MmpL subfamily.

Its subcellular location is the cell membrane. This is Putative membrane protein MJ1562 from Methanocaldococcus jannaschii (strain ATCC 43067 / DSM 2661 / JAL-1 / JCM 10045 / NBRC 100440) (Methanococcus jannaschii).